Reading from the N-terminus, the 1906-residue chain is Retinoic acid-induced protein 1 (1906 aa).

6 disordered regions span residues 1-261 (MQSF…APGQ), 273-299 (RLSYDQQQQQQQQQQQQQQALQSRHHA), 335-370 (YQTFSPSSSHSPARSVGRSPSYSSTPSPLMPNLENF), 469-520 (VSRT…YLSG), 538-571 (SPARVNSNSKAKPESVSTCSVTSPDDMSTKSDDS), and 656-712 (SAWP…GTKP). Residues 13–24 (KQQNYQQTSQET) are compositionally biased toward polar residues. The span at 66-75 (PSGTAAAVAA) shows a compositional bias: low complexity. The span at 124–134 (PQPPPPQPQPL) shows a compositional bias: pro residues. A compositionally biased stretch (low complexity) spans 213 to 226 (SQSFPTSSTYSSSV). Positions 252 to 261 (TASSSLAPGQ) are enriched in polar residues. Composition is skewed to low complexity over residues 278–291 (QQQQQQQQQQQQQQ) and 339–353 (SPSSSHSPARSVGRS). A phosphoserine mark is found at Ser-339 and Ser-345. The residue at position 472 (Thr-472) is a Phosphothreonine. Residues 541-563 (RVNSNSKAKPESVSTCSVTSPDD) are compositionally biased toward polar residues. Phosphoserine occurs at positions 568 and 683. The residue at position 696 (Thr-696) is a Phosphothreonine. Ser-805 bears the Phosphoserine mark. Lys-811 is covalently cross-linked (Glycyl lysine isopeptide (Lys-Gly) (interchain with G-Cter in SUMO2)). A Glycyl lysine isopeptide (Lys-Gly) (interchain with G-Cter in SUMO1) cross-link involves residue Lys-819. 2 positions are modified to phosphoserine: Ser-880 and Ser-892. Lys-901 participates in a covalent cross-link: Glycyl lysine isopeptide (Lys-Gly) (interchain with G-Cter in SUMO1); alternate. A Glycyl lysine isopeptide (Lys-Gly) (interchain with G-Cter in SUMO2); alternate cross-link involves residue Lys-901. Residues 937–947 (KVQSWFESSLS) are compositionally biased toward polar residues. Disordered regions lie at residues 937–1299 (KVQS…ETPD), 1344–1570 (FACK…PLDP), 1613–1637 (VVNSPGDAPKPHRKPSSSASSSSSS), 1746–1775 (AAAATAGKPPRPDGPADPAKQGPLRTSARG), and 1794–1819 (EEAAPADKGRKHECSKEAPAEPGGEA). The segment covering 950–962 (KPGEEGPDGERAP) has biased composition (basic and acidic residues). A compositionally biased stretch (basic residues) spans 996–1005 (KSLRSRRVHR). Ser-1064 bears the Phosphoserine mark. A Phosphothreonine modification is found at Thr-1068. Residues 1101 to 1119 (PSPKAASSPSNPAALPVAS) are compositionally biased toward low complexity. Residue Ser-1122 is modified to Phosphoserine. 2 consecutive short sequence motifs (nuclear localization signal) follow at residues 1160-1177 (RRRPSEGRLPNCRATKKL) and 1223-1240 (KRKSAFMAPVPTKKRNLV). Residues 1242 to 1252 (RSRSSSSSNAS) show a composition bias toward low complexity. Phosphoserine occurs at positions 1352, 1358, and 1374. A Glycyl lysine isopeptide (Lys-Gly) (interchain with G-Cter in SUMO2) cross-link involves residue Lys-1425. Phosphoserine is present on Ser-1431. Over residues 1444–1453 (PKKRSRKGRA) the composition is skewed to basic residues. Composition is skewed to polar residues over residues 1482–1491 (SGTQGASEDN) and 1517–1534 (QPQTRAQKQPGHTNYSSY). Residues 1535 to 1545 (SKRKRLTRGRA) show a composition bias toward basic residues. A compositionally biased stretch (low complexity) spans 1628–1637 (SSSASSSSSS). Residues 1780 to 1835 (LQSCYCCDGREDGGEEAAPADKGRKHECSKEAPAEPGGEAQEHWVHEACAVWTGGV) form a C2HC pre-PHD-type zinc finger. Basic and acidic residues predominate over residues 1798–1812 (PADKGRKHECSKEAP). Residues 1855–1903 (MMCSSCQEAGATIGCCHKGCLHTYHYPCASDAGCIFIEENFSLKCPKHK) form a PHD-type zinc finger.

In terms of tissue distribution, expressed in all tissues examined with higher expression in the heart and brain. No expression was seen in the corpus callosum of the brain.

The protein resides in the cytoplasm. It localises to the nucleus. Transcriptional regulator of the circadian clock components: CLOCK, BMAL1, BMAL2, PER1/3, CRY1/2, NR1D1/2 and RORA/C. Positively regulates the transcriptional activity of CLOCK a core component of the circadian clock. Regulates transcription through chromatin remodeling by interacting with other proteins in chromatin as well as proteins in the basic transcriptional machinery. May be important for embryonic and postnatal development. May be involved in neuronal differentiation. The protein is Retinoic acid-induced protein 1 (RAI1) of Homo sapiens (Human).